We begin with the raw amino-acid sequence, 157 residues long: Transcription elongation factor GreA (157 aa).

A coiled-coil region spans residues 46–67 (AEYHAARERQSFIEGRIKELED).

This sequence belongs to the GreA/GreB family.

Functionally, necessary for efficient RNA polymerase transcription elongation past template-encoded arresting sites. The arresting sites in DNA have the property of trapping a certain fraction of elongating RNA polymerases that pass through, resulting in locked ternary complexes. Cleavage of the nascent transcript by cleavage factors such as GreA or GreB allows the resumption of elongation from the new 3'terminus. GreA releases sequences of 2 to 3 nucleotides. The sequence is that of Transcription elongation factor GreA from Rhodospirillum rubrum (strain ATCC 11170 / ATH 1.1.1 / DSM 467 / LMG 4362 / NCIMB 8255 / S1).